A 715-amino-acid chain; its full sequence is uncharacterized protein (715 aa).

4 disordered regions span residues 192 to 216 (ASSVEESNRANNTSPYPPSNSSVTA), 300 to 348 (NEEV…TSKR), 461 to 481 (ASSSSFGRSHSHLGTSLRSNE), and 580 to 630 (FTVS…KPPK). Residues 202-213 (NNTSPYPPSNSS) show a composition bias toward low complexity. 2 stretches are compositionally biased toward polar residues: residues 301-326 (EEVSNNHARSPHSSRACNTIPSNKND) and 472-481 (HLGTSLRSNE). Low complexity predominate over residues 601–614 (TDSSPSDTISSSPT).

This is an uncharacterized protein from Schizosaccharomyces pombe (strain 972 / ATCC 24843) (Fission yeast).